Consider the following 349-residue polypeptide: MQILLNKTLKPYNSFSVNESADLIIQADSIQDLIDIWSDKKYTDMTKLPLGRGSNTLFCNHFNGVVVLNRLFGKSVTETDTDYLLKISSGEDWPALVEWCVDNGFAGIENLAMIPGCAGSAPIQNIGAYGLELKDICESVEYLDLETLQIKTLKNSECLFGYRESIFKHELKDRCIITAITLRLNKQWQPVLAYGPLSDLRNSKTTPKNVFDKICEIRSKKLPDPNVIGNAGSFFKNPVISEEHYLALCETYPNLPAYDVTEGKKIAAGWLIDNAGLKGFKINGAQVHQEQALVLINTGTATSEDILELANHVKNSVLDMYDIELEHEVRFYLNGEESFLSELFDERTH.

The 171-residue stretch at 17 to 187 (VNESADLIIQ…TAITLRLNKQ (171 aa)) folds into the FAD-binding PCMH-type domain. Arg163 is an active-site residue. Residue Ser233 is the Proton donor of the active site. The active site involves Glu328.

Belongs to the MurB family. The cofactor is FAD.

It localises to the cytoplasm. The enzyme catalyses UDP-N-acetyl-alpha-D-muramate + NADP(+) = UDP-N-acetyl-3-O-(1-carboxyvinyl)-alpha-D-glucosamine + NADPH + H(+). It participates in cell wall biogenesis; peptidoglycan biosynthesis. Cell wall formation. This Aliivibrio fischeri (strain ATCC 700601 / ES114) (Vibrio fischeri) protein is UDP-N-acetylenolpyruvoylglucosamine reductase.